We begin with the raw amino-acid sequence, 153 residues long: Nucleoside diphosphate kinase (153 aa).

Residues K12, F60, R88, T94, R105, and N115 each contribute to the ATP site. The active-site Pros-phosphohistidine intermediate is the H118.

It belongs to the NDK family. Mg(2+) is required as a cofactor.

It localises to the cytoplasm. It catalyses the reaction a 2'-deoxyribonucleoside 5'-diphosphate + ATP = a 2'-deoxyribonucleoside 5'-triphosphate + ADP. It carries out the reaction a ribonucleoside 5'-diphosphate + ATP = a ribonucleoside 5'-triphosphate + ADP. Major role in the synthesis of nucleoside triphosphates other than ATP. The ATP gamma phosphate is transferred to the NDP beta phosphate via a ping-pong mechanism, using a phosphorylated active-site intermediate. The protein is Nucleoside diphosphate kinase of Natronomonas pharaonis (strain ATCC 35678 / DSM 2160 / CIP 103997 / JCM 8858 / NBRC 14720 / NCIMB 2260 / Gabara) (Halobacterium pharaonis).